The chain runs to 192 residues: Der GTPase-activating protein YihI (192 aa).

Residues 1–80 (MSRTKKTRRI…KAAVKEVKDP (80 aa)) form a disordered region. 3 stretches are compositionally biased toward basic and acidic residues: residues 9-25 (RITDIMPARKADKKPEQ), 37-48 (TRYELDAKAREE), and 65-80 (DPAEQKKAAVKEVKDP).

The protein belongs to the YihI family. As to quaternary structure, interacts with Der.

In terms of biological role, a GTPase-activating protein (GAP) that modifies Der/EngA GTPase function. May play a role in ribosome biogenesis. This is Der GTPase-activating protein YihI from Actinobacillus pleuropneumoniae serotype 7 (strain AP76).